A 577-amino-acid polypeptide reads, in one-letter code: Arginine--tRNA ligase (577 aa).

Positions 122 to 132 match the 'HIGH' region motif; it reads PNVAKEMHVGH.

Belongs to the class-I aminoacyl-tRNA synthetase family. Monomer.

The protein resides in the cytoplasm. The enzyme catalyses tRNA(Arg) + L-arginine + ATP = L-arginyl-tRNA(Arg) + AMP + diphosphate. This chain is Arginine--tRNA ligase, found in Haemophilus influenzae (strain PittGG).